The following is a 293-amino-acid chain: Elongation factor Ts (293 aa).

Residues 80–83 (TDFV) are involved in Mg(2+) ion dislocation from EF-Tu.

The protein belongs to the EF-Ts family.

The protein localises to the cytoplasm. Its function is as follows. Associates with the EF-Tu.GDP complex and induces the exchange of GDP to GTP. It remains bound to the aminoacyl-tRNA.EF-Tu.GTP complex up to the GTP hydrolysis stage on the ribosome. The polypeptide is Elongation factor Ts (Janthinobacterium sp. (strain Marseille) (Minibacterium massiliensis)).